The following is a 132-amino-acid chain: Peptide methionine sulfoxide reductase MsrB (132 aa).

Positions 9 to 131 constitute a MsrB domain; it reads DAQWRAELSP…NSASLSFHPK (123 aa). Zn(2+)-binding residues include cysteine 48, cysteine 51, cysteine 97, and cysteine 100. The Nucleophile role is filled by cysteine 120.

The protein belongs to the MsrB Met sulfoxide reductase family. The cofactor is Zn(2+).

The enzyme catalyses L-methionyl-[protein] + [thioredoxin]-disulfide + H2O = L-methionyl-(R)-S-oxide-[protein] + [thioredoxin]-dithiol. The protein is Peptide methionine sulfoxide reductase MsrB of Thiobacillus denitrificans (strain ATCC 25259 / T1).